Here is a 417-residue protein sequence, read N- to C-terminus: Secreted aspartic protease 4 (417 aa).

The signal sequence occupies residues 1–18 (MFLQNILSVLAFALLIDA). The propeptide at 19–75 (APVKRSTGFVTLDFNVKRSLVDPKDPTVEVKRSPLFLDIEPTEIPVDDTGRNDVGKR) is activation peptide. Residues 89–403 (YSADITIGSN…DLDDRKISMA (315 aa)) form the Peptidase A1 domain. The active site involves Asp-107. Pepstatin A is bound at residue 107 to 109 (DTG). A disulfide bridge connects residues Cys-122 and Cys-134. Residue Asn-137 is glycosylated (N-linked (GlcNAc...) asparagine). A pepstatin A-binding site is contributed by 160 to 161 (AD). Asp-267 provides a ligand contact to Zn(2+). Asp-293 is a catalytic residue. 293-297 (DSGTT) contacts pepstatin A. Cys-331 and Cys-369 are disulfide-bonded.

It belongs to the peptidase A1 family. Monomer.

It is found in the secreted. The catalysed reaction is Preferential cleavage at the carboxyl of hydrophobic amino acids, but fails to cleave 15-Leu-|-Tyr-16, 16-Tyr-|-Leu-17 and 24-Phe-|-Phe-25 of insulin B chain. Activates trypsinogen, and degrades keratin.. With respect to regulation, activity is inhibited by squash aspartic peptidase inhibitor (SQAPI). Its function is as follows. Secreted aspartic peptidases (SAPs) are a group of ten acidic hydrolases considered as key virulence factors. These enzymes supply the fungus with nutrient amino acids as well as are able to degrade the selected host's proteins involved in the immune defense. Moreover, acts toward human hemoglobin though limited proteolysis to generate a variety of antimicrobial hemocidins, enabling to compete with the other microorganisms of the same physiological niche using the microbicidal peptides generated from the host protein. Plays a key role in defense against host by cleaving histatin-5 (Hst 5), a peptide from human saliva that carries out fungicidal activity. The cleavage rate decreases in an order of SAP2 &gt; SAP9 &gt; SAP3 &gt; SAP7 &gt; SAP4 &gt; SAP1 &gt; SAP8. The first cleavage occurs between residues 'Lys-17' and 'His-18' of Hst 5, giving DSHAKRHHGYKRKFHEK and HHSHRGY peptides. Simultaneously, the DSHAKRHHGY and KRKFHEKHHSHRGY peptides are also formed. The polypeptide is Secreted aspartic protease 4 (Candida albicans (strain SC5314 / ATCC MYA-2876) (Yeast)).